A 431-amino-acid chain; its full sequence is U-box domain-containing protein 20 (431 aa).

Residues 32-106 enclose the U-box domain; the sequence is TIPSQFQCPI…QGWCGSSLGG (75 aa).

The enzyme catalyses S-ubiquitinyl-[E2 ubiquitin-conjugating enzyme]-L-cysteine + [acceptor protein]-L-lysine = [E2 ubiquitin-conjugating enzyme]-L-cysteine + N(6)-ubiquitinyl-[acceptor protein]-L-lysine.. It participates in protein modification; protein ubiquitination. Its function is as follows. Functions as an E3 ubiquitin ligase. The protein is U-box domain-containing protein 20 (PUB20) of Arabidopsis thaliana (Mouse-ear cress).